Here is a 209-residue protein sequence, read N- to C-terminus: MKKLKLKELESRLQEVDGFEKPKLLLEQYPTRPHIAACMLYTIHNTYDDIENKAVADLGCGCGVLSIGAAMLGAGLCVGFDIDEDALEIFNKNVEEFELTNVDMIQCDVYSLSNRMSKLFDTVIMNPPFGTKNNKGTDMAFLKTALGMARTAVYSLHKSSTREHIQKKAAEWKVKIEIIAELRYDLPALYNFHKKKSVDIEVDLIRFSF.

S-adenosyl-L-methionine contacts are provided by residues Gln-28, Thr-31, Gly-59, Cys-62, Val-64, Asp-81, and 108-109 (DV).

The protein belongs to the methyltransferase superfamily. PrmA family. As to quaternary structure, heterodimer; heterodimerizes with TRMT112. Ubiquitously expressed in brain.

Its subcellular location is the nucleus. It is found in the presynapse. The protein resides in the postsynapse. The catalysed reaction is adenosine(1832) in 18S rRNA + S-adenosyl-L-methionine = N(6)-methyladenosine(1832) in 18S rRNA + S-adenosyl-L-homocysteine + H(+). Its activity is regulated as follows. rRNA N6-adenosine-methyltransferase activity is inhibited by zinc. In terms of biological role, catalytic subunit of a heterodimer with TRMT112, which specifically methylates the 6th position of adenine in position 1832 of 18S rRNA. N6-methylation of adenine(1832) in 18S rRNA resides in the decoding center of 18S rRNA and is required for translation and embryonic stem cells (ESCs) pluripotency and differentiation. In Mus musculus (Mouse), this protein is rRNA N(6)-adenosine-methyltransferase METTL5.